Consider the following 243-residue polypeptide: Peptide deformylase, mitochondrial (243 aa).

A mitochondrion-targeting transit peptide spans 1-39; sequence MARLWGALSLWPLWAAVPWGGAAAVGVRACSSTAAPDGV. Residues glycine 71, proline 169, and glycine 171 each coordinate substrate. The segment at 165 to 175 is hydrophobic dimerization interface; the sequence is LVTFPEGCESV. Residues cysteine 172 and histidine 214 each contribute to the Co(2+) site. Glutamate 215 is an active-site residue. Histidine 218 provides a ligand contact to Co(2+).

Belongs to the polypeptide deformylase family. In terms of assembly, homodimer. Co(2+) is required as a cofactor. In terms of tissue distribution, ubiquitous.

It localises to the mitochondrion. The enzyme catalyses N-terminal N-formyl-L-methionyl-[peptide] + H2O = N-terminal L-methionyl-[peptide] + formate. Functionally, removes the formyl group from the N-terminal Met of newly synthesized proteins. The chain is Peptide deformylase, mitochondrial from Homo sapiens (Human).